Reading from the N-terminus, the 865-residue chain is Fanconi-associated nuclease 1 homolog (865 aa).

The UBZ4-type zinc finger occupies 35–62 (GKICPLCETKFSLASYKSHMNTCNVADD). Residues cysteine 38, cysteine 41, histidine 53, and cysteine 57 each coordinate Zn(2+). Disordered stretches follow at residues 90 to 140 (DASF…SLDV) and 162 to 187 (RRSS…PVKK). 2 stretches are compositionally biased toward basic and acidic residues: residues 93 to 112 (FSDK…REVP) and 174 to 187 (DQAD…PVKK). Positions 682, 810, 825, and 826 each coordinate Mn(2+). Residues 744–857 (QELIEENIRK…GIRAEVCHVA (114 aa)) enclose the VRR-NUC domain.

It belongs to the FAN1 family. Mn(2+) is required as a cofactor. Mg(2+) serves as cofactor.

It is found in the nucleus. The catalysed reaction is Hydrolytically removes 5'-nucleotides successively from the 3'-hydroxy termini of 3'-hydroxy-terminated oligonucleotides.. Its function is as follows. Nuclease required for the repair of DNA interstrand cross-links (ICL). Acts as a 5'-3' exonuclease that anchors at a cut end of DNA and cleaves DNA successively at every third nucleotide, allowing to excise an ICL from one strand through flanking incisions. The polypeptide is Fanconi-associated nuclease 1 homolog (fan-1) (Caenorhabditis elegans).